A 215-amino-acid polypeptide reads, in one-letter code: Mediator of RNA polymerase II transcription subunit 20 (215 aa).

This sequence belongs to the Mediator complex subunit 20 family. In terms of assembly, component of the Mediator complex.

Its subcellular location is the nucleus. Its function is as follows. Component of the Mediator complex, a coactivator involved in the regulated transcription of nearly all RNA polymerase II-dependent genes. Mediator functions as a bridge to convey information from gene-specific regulatory proteins to the basal RNA polymerase II transcription machinery. Mediator is recruited to promoters by direct interactions with regulatory proteins and serves as a scaffold for the assembly of a functional preinitiation complex with RNA polymerase II and the general transcription factors. The polypeptide is Mediator of RNA polymerase II transcription subunit 20 (SRB2) (Candida glabrata (strain ATCC 2001 / BCRC 20586 / JCM 3761 / NBRC 0622 / NRRL Y-65 / CBS 138) (Yeast)).